We begin with the raw amino-acid sequence, 415 residues long: Phosphoglycerate kinase (415 aa).

(2R)-3-phosphoglycerate-binding residues include Val22, Asp23, Phe24, Asn25, Gln37, Arg38, Ser61, His62, Gly64, Arg65, Arg121, His168, and Arg169. Gly212 lines the ADP pocket. Gly212 lines the CDP pocket. AMP contacts are provided by Ala213 and Lys214. ATP is bound at residue Ala213. Ala213 contacts Mg(2+). Residues Ala216 and Asp217 each contribute to the Mg(2+) site. Asp217 contacts CDP. Position 218 (Lys218) interacts with AMP. Lys218 contacts ATP. An ADP-binding site is contributed by Gly236. Position 236 (Gly236) interacts with CDP. Residues Gly237 and Gly311 each coordinate AMP. ATP contacts are provided by Gly237 and Gly311. Residues Gly336 and Phe341 each contribute to the CDP site. Phe341 lines the ADP pocket. Residue Glu342 coordinates AMP. The ATP site is built by Glu342, Asp373, and Thr374. Asp373 serves as a coordination point for Mg(2+).

Belongs to the phosphoglycerate kinase family. As to quaternary structure, monomer. Requires Mg(2+) as cofactor.

The protein localises to the cytoplasm. The enzyme catalyses (2R)-3-phosphoglycerate + ATP = (2R)-3-phospho-glyceroyl phosphate + ADP. It participates in carbohydrate degradation; glycolysis; pyruvate from D-glyceraldehyde 3-phosphate: step 2/5. Its function is as follows. Enzyme of the glycolytic pathway. Glycolysis is essential in glial cells but not in neurons; neurons rely on the citric acid cycle for their energy needs, and on lactate and alanine secreted into the hemolymph by glial cells to fuel it. This chain is Phosphoglycerate kinase, found in Drosophila melanogaster (Fruit fly).